The primary structure comprises 241 residues: Putative ABC transporter ATP-binding protein CA_C0773 (241 aa).

The ABC transporter domain maps to 2–241; it reads IKLEKVSFTY…REFLMECNII (240 aa). 34–41 lines the ATP pocket; the sequence is GPNGSGKS.

This sequence belongs to the ABC transporter superfamily.

Its subcellular location is the cell membrane. In terms of biological role, probably part of an ABC transporter complex. Responsible for energy coupling to the transport system. The chain is Putative ABC transporter ATP-binding protein CA_C0773 from Clostridium acetobutylicum (strain ATCC 824 / DSM 792 / JCM 1419 / IAM 19013 / LMG 5710 / NBRC 13948 / NRRL B-527 / VKM B-1787 / 2291 / W).